A 128-amino-acid polypeptide reads, in one-letter code: Fluoride-specific ion channel FluC (128 aa).

The next 4 membrane-spanning stretches (helical) occupy residues 7–27, 34–54, 70–90, and 104–124; these read AVLL…LIAV, TGFP…IGMI, LLLA…MYEI, and LYLI…MALA. Na(+) contacts are provided by Gly78 and Thr81.

This sequence belongs to the fluoride channel Fluc/FEX (TC 1.A.43) family.

It localises to the cell inner membrane. The catalysed reaction is fluoride(in) = fluoride(out). Its activity is regulated as follows. Na(+) is not transported, but it plays an essential structural role and its presence is essential for fluoride channel function. Functionally, fluoride-specific ion channel. Important for reducing fluoride concentration in the cell, thus reducing its toxicity. The sequence is that of Fluoride-specific ion channel FluC from Prosthecochloris aestuarii (strain DSM 271 / SK 413).